The chain runs to 465 residues: Lysosomal dipeptide transporter MFSD1 (465 aa).

The disordered stretch occupies residues 1-23; that stretch reads MEEEDEEARALLAGGPDEADRGA. The Dileucine internalization motif signature appears at 11–12; the sequence is LL. 12 helical membrane-spanning segments follow: residues 39–59, 83–103, 113–133, 135–155, 170–191, 213–233, 266–286, 303–323, 331–351, 361–381, 392–412, and 418–438; these read LAHRLLVLLLMCFLGFGSYFC, LLYAWYSWPNVVLCFFGGFLI, TIIFSCFVCIGQVVFALGGIF, AFWLMEFGRFVFGIGGESLAV, LNLVFGLQLSMARIGSTVNMNL, ITLMIGGITCILSLICALALA, LWLIFIICVCYYVAVFPFIGL, SAINSVVYVISAPMSPVFGLL, IIWVLCAVAATLVSHMMLAFT, LLGLSYSLLACALWPMVAFVV, FMQSIQNLGLAIISIIAGMIL, and LFLEVFFIACVSLSLLSVVLL.

Belongs to the major facilitator superfamily. In terms of assembly, homodimer. Interacts with lysosomal protein GLMP (via lumenal domain); the interaction starts while both proteins are still in the endoplasmic reticulum and is required for stabilization of MFSD1 in lysosomes but has no direct effect on its targeting to lysosomes or transporter activity.

Its subcellular location is the lysosome membrane. It carries out the reaction L-alpha-aminoacyl-L-arginine(out) = L-alpha-aminoacyl-L-arginine(in). The catalysed reaction is L-arginyl-L-alpha-amino acid(out) = L-arginyl-L-alpha-amino acid(in). The enzyme catalyses L-arginyl-glycine(out) = L-arginyl-glycine(in). It catalyses the reaction L-alpha-aminoacyl-L-lysine(out) = L-alpha-aminoacyl-L-lysine(in). It carries out the reaction L-aspartyl-L-lysine(out) = L-aspartyl-L-lysine(in). The catalysed reaction is L-alanyl-L-lysine(out) = L-alanyl-L-lysine(in). The enzyme catalyses L-lysyl-L-alpha-amino acid(out) = L-lysyl-L-alpha-amino acid(in). It catalyses the reaction L-lysyl-L-alanine(out) = L-lysyl-L-alanine(in). It carries out the reaction L-lysyl-L-lysine(out) = L-lysyl-L-lysine(in). The catalysed reaction is L-lysyl-glycine(out) = L-lysyl-glycine(in). The enzyme catalyses L-alpha-aminoacyl-L-histidine(out) = L-alpha-aminoacyl-L-histidine(in). It catalyses the reaction L-histidyl-L-alpha-amino acid(out) = L-histidyl-L-alpha-amino acid(in). It carries out the reaction L-histidyl-glycine(out) = L-histidyl-glycine(in). Functionally, lysosomal dipeptide uniporter that selectively exports lysine, arginine or histidine-containing dipeptides with a net positive charge from the lysosome lumen into the cytosol. Could play a role in a specific type of protein O-glycosylation indirectly regulating macrophages migration and tissue invasion. Also essential for liver homeostasis. This Homo sapiens (Human) protein is Lysosomal dipeptide transporter MFSD1.